Consider the following 95-residue polypeptide: ATP-dependent Clp protease adapter protein ClpS (95 aa).

The protein belongs to the ClpS family. In terms of assembly, binds to the N-terminal domain of the chaperone ClpA.

Involved in the modulation of the specificity of the ClpAP-mediated ATP-dependent protein degradation. This Synechococcus elongatus (strain ATCC 33912 / PCC 7942 / FACHB-805) (Anacystis nidulans R2) protein is ATP-dependent Clp protease adapter protein ClpS.